We begin with the raw amino-acid sequence, 107 residues long: uncharacterized protein (107 aa).

Residues 1–4 (MSLV) are Cytoplasmic-facing. A helical transmembrane segment spans residues 5 to 25 (IDIADTIVSLTALIGLIITLI). At 26-107 (KFHSQNKEDA…ELCRSSDRSK (82 aa)) the chain is on the extracellular side.

It localises to the host membrane. This is an uncharacterized protein from Acidianus sp. F28 (AFV-2).